We begin with the raw amino-acid sequence, 290 residues long: Endo-1,4-beta-xylanase B (290 aa).

The first 19 residues, 1–19, serve as a signal peptide directing secretion; it reads MVSFNSLLVAVSAATCALA. The N-linked (GlcNAc...) asparagine glycan is linked to asparagine 26. The region spanning 34 to 222 is the GH11 domain; sequence QSTPAGTGTN…SSGSSTVTVN (189 aa). Glutamate 118 functions as the Nucleophile in the catalytic mechanism. Residue glutamate 209 is the Proton donor of the active site. Residues 223–248 are disordered; sequence PAGGVTSPIAPTGPSSVSTTPSGPSS. Positions 234–248 are enriched in low complexity; it reads TGPSSVSTTPSGPSS. A CBM1 domain is found at 255–290; the sequence is TCSALYGQCGGQGWTGPTCCSSGTCKFSNNWYSQCL.

The protein belongs to the glycosyl hydrolase 11 (cellulase G) family.

It localises to the secreted. The catalysed reaction is Endohydrolysis of (1-&gt;4)-beta-D-xylosidic linkages in xylans.. It functions in the pathway glycan degradation; xylan degradation. Functionally, endo-1,4-beta-xylanase involved in the hydrolysis of xylan, a major structural heterogeneous polysaccharide found in plant biomass representing the second most abundant polysaccharide in the biosphere, after cellulose. This Phanerodontia chrysosporium (White-rot fungus) protein is Endo-1,4-beta-xylanase B (xynB).